A 368-amino-acid chain; its full sequence is Protein L-Myc (368 aa).

3 disordered regions span residues 39–79 (PPTS…RGHS), 112–179 (RLAP…EKRR), and 218–295 (FPPE…FLER). The segment covering 135 to 147 (LEASNPAPATQCQ) has biased composition (polar residues). Acidic residues predominate over residues 247 to 258 (EEEEEEEEEEEI). A compositionally biased stretch (basic and acidic residues) spans 283–294 (DVTKRKNHNFLE). The bHLH domain maps to 285-337 (TKRKNHNFLERKRRNDLRSRFLALRDQVPTLASCSKAPKVVILSKALEYLQAL). A leucine-zipper region spans residues 337 to 365 (LVGAEKKMATEKRQLRCRQQQLQKRIAYL).

In terms of assembly, efficient DNA binding requires dimerization with another bHLH protein. Binds DNA as a heterodimer with MAX.

The protein localises to the nucleus. This chain is Protein L-Myc (Mycl), found in Mus musculus (Mouse).